The chain runs to 862 residues: Leucine--tRNA ligase (862 aa).

The 'HIGH' region signature appears at 44 to 54; it reads PYPSGRIHMGH. A 'KMSKS' region motif is present at residues 622 to 626; sequence KMSKS. Residue Lys625 participates in ATP binding.

This sequence belongs to the class-I aminoacyl-tRNA synthetase family.

The protein localises to the cytoplasm. It catalyses the reaction tRNA(Leu) + L-leucine + ATP = L-leucyl-tRNA(Leu) + AMP + diphosphate. This chain is Leucine--tRNA ligase, found in Rhodospirillum rubrum (strain ATCC 11170 / ATH 1.1.1 / DSM 467 / LMG 4362 / NCIMB 8255 / S1).